The primary structure comprises 423 residues: Phytoene synthase, chloroplastic (423 aa).

A chloroplast-targeting transit peptide spans 1-136; sequence MVVAILRVVS…DAYDRCGEVC (136 aa).

It belongs to the phytoene/squalene synthase family. In terms of assembly, monomer.

It localises to the plastid. The protein localises to the chloroplast. It catalyses the reaction 2 (2E,6E,10E)-geranylgeranyl diphosphate = 15-cis-phytoene + 2 diphosphate. It functions in the pathway carotenoid biosynthesis; phytoene biosynthesis; all-trans-phytoene from geranylgeranyl diphosphate: step 1/1. Its function is as follows. Catalyzes the reaction from prephytoene diphosphate to phytoene. The chain is Phytoene synthase, chloroplastic (PSY) from Narcissus pseudonarcissus (Daffodil).